Here is a 32-residue protein sequence, read N- to C-terminus: Conotoxin Cltx-4 (32 aa).

Residues Pro-2, Pro-24, Pro-28, and Pro-30 each carry the 4-hydroxyproline modification. Ser-32 is modified (serine amide).

Post-translationally, contains 4 disulfide bonds. Expressed by the venom duct.

The protein localises to the secreted. This is Conotoxin Cltx-4 from Californiconus californicus (California cone).